The following is a 58-amino-acid chain: Small integral membrane protein 11 (58 aa).

A helical membrane pass occupies residues 9–29 (FPLLLYILAAKTLILCLAFAG). The stretch at 29-58 (GVKVYQRKRLEAKQQKVEAEKRKQAEKKES) forms a coiled coil.

Its subcellular location is the membrane. In Bos taurus (Bovine), this protein is Small integral membrane protein 11 (SMIM11).